A 329-amino-acid polypeptide reads, in one-letter code: GTP 3',8-cyclase (329 aa).

The Radical SAM core domain maps to 8–234 (AFARKFYYLR…QLRQRSDGPA (227 aa)). R17 is a binding site for GTP. Residues C24 and C28 each contribute to the [4Fe-4S] cluster site. Y30 contacts S-adenosyl-L-methionine. Residue C31 coordinates [4Fe-4S] cluster. R68 contributes to the GTP binding site. G72 is an S-adenosyl-L-methionine binding site. A GTP-binding site is contributed by T99. S123 serves as a coordination point for S-adenosyl-L-methionine. K160 contacts GTP. M194 is a binding site for S-adenosyl-L-methionine. C257 and C260 together coordinate [4Fe-4S] cluster. 262-264 (RLR) provides a ligand contact to GTP. C274 lines the [4Fe-4S] cluster pocket.

Belongs to the radical SAM superfamily. MoaA family. As to quaternary structure, monomer and homodimer. It depends on [4Fe-4S] cluster as a cofactor.

The catalysed reaction is GTP + AH2 + S-adenosyl-L-methionine = (8S)-3',8-cyclo-7,8-dihydroguanosine 5'-triphosphate + 5'-deoxyadenosine + L-methionine + A + H(+). It participates in cofactor biosynthesis; molybdopterin biosynthesis. In terms of biological role, catalyzes the cyclization of GTP to (8S)-3',8-cyclo-7,8-dihydroguanosine 5'-triphosphate. The chain is GTP 3',8-cyclase from Salmonella paratyphi B (strain ATCC BAA-1250 / SPB7).